Here is a 496-residue protein sequence, read N- to C-terminus: Mothers against decapentaplegic homolog 6 (496 aa).

A compositionally biased stretch (basic residues) spans 1-15 (MFRSKRSGLVRRLWR). 2 disordered regions span residues 1-116 (MFRS…PGWL) and 136-156 (GAPR…AGGG). Arg-75 and Arg-82 each carry dimethylated arginine; alternate. Omega-N-methylarginine; alternate is present on residues Arg-75 and Arg-82. The region spanning 148–275 (AALEPAGGGR…FSRLCGPESP (128 aa)) is the MH1 domain. A Glycyl lysine isopeptide (Lys-Gly) (interchain with G-Cter in ubiquitin) cross-link involves residue Lys-173. Residues Cys-205, Cys-247, Cys-260, and His-265 each contribute to the Zn(2+) site. Residues 331–496 (WCSVAYWEHR…WLEILLNNPR (166 aa)) form the MH2 domain. Position 435 is a phosphoserine; by PRKX; in vitro (Ser-435).

It belongs to the dwarfin/SMAD family. Interacts with NEDD4L. Interacts with WWP1. Interacts with STAMBP and PRKX. Interacts with RNF111 and AXIN1. Interacts with TGF-beta type I receptor superfamily members, including ACVR1B, BMPR1B and TGFBR1. In response to BMP2, but not to TGFB treatment, interacts with SMAD1, but not with SMAD2, nor with SMAD4; this interaction may inhibit SMAD1 binding to SMAD4. Interacts with HOXC8 and HOXC9. Interacts with PELI1; this interaction interferes with PELI1 complex formation with TRAF6, IRAK1, IRAK4 and MYD88 in response to IL1B and hence negatively regulates IL1R-TLR signaling. Interacts with TSC22D1/TSC-22. Post-translationally, phosphorylated by BMP type 1 receptor kinase and by PRKX. In terms of processing, monoubiquitinated at Lys-173 by the E2/E3 hybrid ubiquitin-protein ligase UBE2O, leading to reduced binding affinity for the activated BMP type I receptor ACVR1/ALK2, thereby enhancing BMP7 and regulating adipocyte differentiation. Ubiquitinated by WWP1. Ubiquitinated by ARK2C, promoting proteasomal degradation, leading to enhance the BMP-Smad signaling. Arginine methylation by PRMT1, which is recruited by BMPR2, initiates BMP-Induced signaling and induces dissociation from the BMPR1B receptor at the cell surface leading to derepress downstream Smad1/Smad5 signaling. Expressed in the brain, heart, ovary, peripheral blood leukocytes, small intestine, spleen, thymus, bone marrow, fetal liver and lymph nodes.

The protein resides in the nucleus. Its function is as follows. Transforming growth factor-beta superfamily receptors signaling occurs through the Smad family of intracellular mediators. SMAD6 is an inhibitory Smad (i-Smad) that negatively regulates signaling downstream of type I transforming growth factor-beta. Acts as a mediator of TGF-beta and BMP anti-inflammatory activities. Suppresses IL1R-TLR signaling through its direct interaction with PEL1, preventing NF-kappa-B activation, nuclear transport and NF-kappa-B-mediated expression of pro-inflammatory genes. Blocks the BMP-SMAD1 signaling pathway by competing with SMAD4 for receptor-activated SMAD1-binding. Binds to regulatory elements in target promoter regions. The sequence is that of Mothers against decapentaplegic homolog 6 (SMAD6) from Homo sapiens (Human).